The sequence spans 442 residues: Trigger factor (442 aa).

The PPIase FKBP-type domain occupies 165 to 250; it reads DDRVIIDFEG…LQKVMAPELP (86 aa).

This sequence belongs to the FKBP-type PPIase family. Tig subfamily.

The protein localises to the cytoplasm. It carries out the reaction [protein]-peptidylproline (omega=180) = [protein]-peptidylproline (omega=0). Its function is as follows. Involved in protein export. Acts as a chaperone by maintaining the newly synthesized protein in an open conformation. Functions as a peptidyl-prolyl cis-trans isomerase. In Coxiella burnetii (strain CbuG_Q212) (Coxiella burnetii (strain Q212)), this protein is Trigger factor.